We begin with the raw amino-acid sequence, 180 residues long: Large ribosomal subunit protein uL15 (180 aa).

Residues 1 to 62 (MKKERLEQAA…KTAGRGSKGQ (62 aa)) are disordered. Residues 35–44 (GAKKEKKRVG) are compositionally biased toward basic residues.

Belongs to the universal ribosomal protein uL15 family. Part of the 50S ribosomal subunit.

Binds to the 23S rRNA. The chain is Large ribosomal subunit protein uL15 from Leptospira borgpetersenii serovar Hardjo-bovis (strain JB197).